A 58-amino-acid polypeptide reads, in one-letter code: Large ribosomal subunit protein eL24 (58 aa).

Positions 6, 9, 32, and 36 each coordinate Zn(2+). The segment at cysteine 6–cysteine 36 adopts a C4-type zinc-finger fold.

This sequence belongs to the eukaryotic ribosomal protein eL24 family. Part of the 50S ribosomal subunit. Forms a cluster with proteins L3 and L14. Requires Zn(2+) as cofactor.

Binds to the 23S rRNA. In Pyrobaculum neutrophilum (strain DSM 2338 / JCM 9278 / NBRC 100436 / V24Sta) (Thermoproteus neutrophilus), this protein is Large ribosomal subunit protein eL24.